A 502-amino-acid chain; its full sequence is 4,4'-diapophytoene desaturase (4,4'-diaponeurosporene-forming) (502 aa).

Residue 5 to 17 (VIGAGVTGLAAAA) coordinates FAD.

It belongs to the carotenoid/retinoid oxidoreductase family. CrtN subfamily.

The enzyme catalyses 15-cis-4,4'-diapophytoene + 3 FAD + 3 H(+) = all-trans-4,4'-diaponeurosporene + 3 FADH2. Its pathway is carotenoid biosynthesis; staphyloxanthin biosynthesis; staphyloxanthin from farnesyl diphosphate: step 2/5. Functionally, involved in the biosynthesis of the yellow-orange carotenoid staphyloxanthin, which plays a role in the virulence via its protective function against oxidative stress. Catalyzes three successive dehydrogenation reactions that lead to the introduction of three double bonds into 4,4'-diapophytoene (dehydrosqualene), with 4,4'-diapophytofluene and 4,4'-diapo-zeta-carotene as intermediates, and 4,4'-diaponeurosporene (the major deep-yellow pigment in staphylococci strains) as the end product. The chain is 4,4'-diapophytoene desaturase (4,4'-diaponeurosporene-forming) from Staphylococcus aureus (strain bovine RF122 / ET3-1).